We begin with the raw amino-acid sequence, 187 residues long: MYAIIRTGGKQYKVQAGDVVQVDKLEQALGAEFEINEVLMVGGESTAVGQPLVKGAKVTVVVTKQAKTRKEIVFKKKRRQGYRKFATHKQEFTELFVKAISFDGKTAKSDEAATVVDVKAVRAEKAQARVAARKERAANKGPAEVVKKAAKKVAKKKVAKKAVKKTVKKATKTGAKKKAAKKTSKKA.

A disordered region spans residues 157–187 (KVAKKAVKKTVKKATKTGAKKKAAKKTSKKA).

The protein belongs to the bacterial ribosomal protein bL21 family. Part of the 50S ribosomal subunit. Contacts protein L20.

Its function is as follows. This protein binds to 23S rRNA in the presence of protein L20. This Bdellovibrio bacteriovorus (strain ATCC 15356 / DSM 50701 / NCIMB 9529 / HD100) protein is Large ribosomal subunit protein bL21.